A 203-amino-acid chain; its full sequence is Small ribosomal subunit protein uS7B (203 aa).

The protein belongs to the universal ribosomal protein uS7 family. As to quaternary structure, component of the small ribosomal subunit (SSU). Mature yeast ribosomes consist of a small (40S) and a large (60S) subunit. The 40S small subunit contains 1 molecule of ribosomal RNA (18S rRNA) and at least 33 different proteins. The large 60S subunit contains 3 rRNA molecules (25S, 5.8S and 5S rRNA) and at least 46 different proteins.

Its subcellular location is the cytoplasm. In terms of biological role, component of the ribosome, a large ribonucleoprotein complex responsible for the synthesis of proteins in the cell. The small ribosomal subunit (SSU) binds messenger RNAs (mRNAs) and translates the encoded message by selecting cognate aminoacyl-transfer RNA (tRNA) molecules. The large subunit (LSU) contains the ribosomal catalytic site termed the peptidyl transferase center (PTC), which catalyzes the formation of peptide bonds, thereby polymerizing the amino acids delivered by tRNAs into a polypeptide chain. The nascent polypeptides leave the ribosome through a tunnel in the LSU and interact with protein factors that function in enzymatic processing, targeting, and the membrane insertion of nascent chains at the exit of the ribosomal tunnel. This chain is Small ribosomal subunit protein uS7B (rps502), found in Schizosaccharomyces pombe (strain 972 / ATCC 24843) (Fission yeast).